A 183-amino-acid polypeptide reads, in one-letter code: Inosine/xanthosine triphosphatase (183 aa).

Asp75 provides a ligand contact to Mg(2+). 75–76 contacts substrate; sequence DG.

The protein belongs to the YjjX NTPase family. In terms of assembly, homodimer. Mg(2+) serves as cofactor. The cofactor is Mn(2+).

It catalyses the reaction XTP + H2O = XDP + phosphate + H(+). The catalysed reaction is ITP + H2O = IDP + phosphate + H(+). Phosphatase that hydrolyzes non-canonical purine nucleotides such as XTP and ITP to their respective diphosphate derivatives. Probably excludes non-canonical purines from DNA/RNA precursor pool, thus preventing their incorporation into DNA/RNA and avoiding chromosomal lesions. The protein is Inosine/xanthosine triphosphatase of Vibrio vulnificus (strain YJ016).